A 712-amino-acid polypeptide reads, in one-letter code: Copper amine oxidase 1 (712 aa).

319-330 (AFDLGEYGAGYL) is a binding site for substrate. The active-site Proton acceptor is D321. A disulfide bond links C340 and C366. 404–409 (AANYEY) lines the substrate pocket. Y407 serves as the catalytic Schiff-base intermediate with substrate; via topaquinone. Y407 bears the 2',4',5'-topaquinone mark. Residues H458 and H460 each contribute to the Cu cation site. Mn(2+) contacts are provided by D616 and I617. Cu cation is bound at residue H627.

The protein belongs to the copper/topaquinone oxidase family. Homodimer. Requires Cu cation as cofactor. Zn(2+) serves as cofactor. The cofactor is L-topaquinone. It depends on Mn(2+) as a cofactor. Post-translationally, topaquinone (TPQ) is generated by copper-dependent autoxidation of a specific tyrosyl residue.

Its subcellular location is the cytoplasm. The enzyme catalyses a primary methyl amine + O2 + H2O = an aldehyde + H2O2 + NH4(+). In terms of biological role, copper amine oxidase involved in the metabolism of xenobiotic and biogenic amines. Capable of catalyzing the oxidative deamination of primary amines such as ethylamine as alternate sources of nitrogen to support growth. This chain is Copper amine oxidase 1 (cao1), found in Schizosaccharomyces pombe (strain 972 / ATCC 24843) (Fission yeast).